Consider the following 337-residue polypeptide: Pyridoxal 5'-phosphate synthase subunit PdxS (337 aa).

D65 serves as a coordination point for D-ribose 5-phosphate. K122 serves as the catalytic Schiff-base intermediate with D-ribose 5-phosphate. G194 provides a ligand contact to D-ribose 5-phosphate. K206 contributes to the D-glyceraldehyde 3-phosphate binding site. D-ribose 5-phosphate is bound by residues G255 and G276 to S277.

It belongs to the PdxS/SNZ family. In the presence of PdxT, forms a dodecamer of heterodimers.

The enzyme catalyses aldehydo-D-ribose 5-phosphate + D-glyceraldehyde 3-phosphate + L-glutamine = pyridoxal 5'-phosphate + L-glutamate + phosphate + 3 H2O + H(+). Its pathway is cofactor biosynthesis; pyridoxal 5'-phosphate biosynthesis. Catalyzes the formation of pyridoxal 5'-phosphate from ribose 5-phosphate (RBP), glyceraldehyde 3-phosphate (G3P) and ammonia. The ammonia is provided by the PdxT subunit. Can also use ribulose 5-phosphate and dihydroxyacetone phosphate as substrates, resulting from enzyme-catalyzed isomerization of RBP and G3P, respectively. The polypeptide is Pyridoxal 5'-phosphate synthase subunit PdxS (Metallosphaera sedula (strain ATCC 51363 / DSM 5348 / JCM 9185 / NBRC 15509 / TH2)).